The sequence spans 1196 residues: ATP-dependent helicase/deoxyribonuclease subunit B (1196 aa).

C823, C1149, C1152, and C1158 together coordinate [4Fe-4S] cluster.

Belongs to the helicase family. AddB/RexB type 2 subfamily. In terms of assembly, heterodimer of AddA and RexB. The cofactor is Mg(2+). It depends on [4Fe-4S] cluster as a cofactor.

In terms of biological role, the heterodimer acts as both an ATP-dependent DNA helicase and an ATP-dependent, dual-direction single-stranded exonuclease. Recognizes the chi site generating a DNA molecule suitable for the initiation of homologous recombination. This subunit has 5' -&gt; 3' nuclease activity but not helicase activity. This is ATP-dependent helicase/deoxyribonuclease subunit B from Enterococcus faecalis (strain ATCC 700802 / V583).